A 376-amino-acid chain; its full sequence is Heme-dependent oxidative N-demethylase gamma subunit (376 aa).

As to quaternary structure, the heme-dependent oxidative N-demethylase (HODM) is a heterotetramer composed of a catalytic alpha subunit, a FMN/2Fe-2S-dependent oxidoreductase beta subunit, a gamma subunit with putative aminotransferase activity, and a delta subunit of unknown function.

Component of the heme-dependent oxidative N-demethylase (HODM) enzyme, that catalyzes the NADPH-dependent oxidation of dimethylamine (DMA) to methylamine (MA) and formaldehyde. Functions in bacterial methylated amine catabolism, linking alkylamine oxidation to the tetrahydrofolate C1 pool. The gamma subunit of HODM may act as an aminomethyltransferase involved in the detoxification of formaldehyde released by the alpha subunit; this process requires tetrahydrofolate (THF). In Ectopseudomonas mendocina (strain ymp) (Pseudomonas mendocina), this protein is Heme-dependent oxidative N-demethylase gamma subunit.